We begin with the raw amino-acid sequence, 345 residues long: MEEEKYLPELMAEKDSLDPSFVHAMRLLDEEIVKFQDSEGNKEDGEKKYLDIISNKNIKLSERVLIPVKQYPKFNFVGKLLGPRGNSLKRLQEETGAKMSILGKGSMRDKIKEEELRKSDEAKHAHLSDELHVLLEVFAPPGEAYSRMSHALEEIKKFLVPDYNDEIRQEQLRELSYLNGSDDSERGKGTRGRGIRVPSTPSRNRGGVISPAFPGRGASATRGAPITRGTISTVARGIPTPRAKAAPTTPGYRLPPPLTIETYDDYGYDDGFGEDYDEQSYDIYENNYNSQTQSVSEYYDYEHGTNEESYNHYEQEEWSKSRSTLKAPLQRPARAGYREHPYGRY.

A KH domain is found at 65-131 (LIPVKQYPKF…AKHAHLSDEL (67 aa)). Disordered regions lie at residues 178–224 (LNGS…TRGA) and 321–345 (SRST…YGRY). The segment covering 336 to 345 (GYREHPYGRY) has biased composition (basic and acidic residues).

It belongs to the KHDRBS family.

It is found in the nucleus. In terms of biological role, RNA-binding protein that plays a role in the regulation of alternative splicing. The chain is KH domain-containing, RNA-binding, signal transduction-associated protein 2 (khdrbs2) from Xenopus tropicalis (Western clawed frog).